Consider the following 299-residue polypeptide: MSEKETPSPVLDVKKEKNEETGIDEEKSSEDDCSKRSKVKSNPSKFSVNSILSPLESLVRVQQQLLKMAASKSGTPGTNAGVPGAFPYGPGRLPGNYFAGPFPGYSGAQPNWYNGNDPRFAAAAALLPCSIDPVRSAINHQFSMSSMSQRRKRRVLFSQAQVYELERRFKQAKYLTAPEREQLANSIRLTPTQVKIWFQNHRYKCKRQEKEKAMSGLGHSEDGSSPPPDNDDDDDKYSIEMDDKDDEEEEESEKPVLKPSGVFGLPYPPNAAAAAAAAAAAFNFPFAAQGPNPAYYMRW.

Over residues 1–35 (MSEKETPSPVLDVKKEKNEETGIDEEKSSEDDCSK) the composition is skewed to basic and acidic residues. Disordered regions lie at residues 1–45 (MSEK…NPSK) and 208–263 (QEKE…SGVF). Positions 150 to 209 (RRKRRVLFSQAQVYELERRFKQAKYLTAPEREQLANSIRLTPTQVKIWFQNHRYKCKRQE) form a DNA-binding region, homeobox. Residues 242-252 (DDKDDEEEEES) show a composition bias toward acidic residues.

This sequence belongs to the NK-2 homeobox family. As to expression, expressed in the 8 vulval muscles, 8-10 ventral neurons in the head and in the most posterior pharyngeal muscle cell, m8. Expressed in SIA, SIB and SMB sublateral motor neurons, and in muscles of the pharynx and vulva.

It localises to the nucleus. Probable transcriptional regulator that is required in neural development for the normal formation of sublateral cholinergic motor neuron processes. Plays a role in regulating the expression of acetylcholine transporter protein unc-17 in the sublateral processes. In particular, it is required in sublateral motor neurons for a left-right turning behavior that occurs during the lethargus phase of the normal sleep process called 'flipping'. During 'flipping' animals rotate 180 degrees about their longitudinal axis. The protein is Homeobox protein ceh-24 of Caenorhabditis elegans.